Consider the following 100-residue polypeptide: Non-histone chromosomal protein HMG-14 (100 aa).

A disordered region spans residues 1-100 (MPKRKVSSAE…EAGEKEAKSD (100 aa)). Ser-7 carries the post-translational modification ADP-ribosylserine. Ser-8 carries the post-translational modification Phosphoserine. Lys-14 is subject to N6-acetyllysine. The residue at position 21 (Ser-21) is a Phosphoserine; by RPS6KA5. Ser-25 is subject to ADP-ribosylserine; alternate. Phosphoserine; alternate; by RPS6KA5 is present on Ser-25. N6-acetyllysine is present on Lys-27. 2 stretches are compositionally biased toward basic and acidic residues: residues 30 to 50 (AKVE…DKKV) and 69 to 85 (ETKE…KTEE). At Thr-81 the chain carries Phosphothreonine. Lys-82 is modified (N6-acetyllysine). Ser-86, Ser-89, and Ser-99 each carry phosphoserine.

As to quaternary structure, interacts with transcriptional regulator SEHBP. In terms of processing, phosphorylation on Ser-21 and Ser-25 weakens binding to nucleosomes and increases the rate of H3 phosphorylation. Phosphorylation favors cytoplasmic localization.

The protein localises to the nucleus. It is found in the cytoplasm. Its function is as follows. Binds to the inner side of the nucleosomal DNA thus altering the interaction between the DNA and the histone octamer. May be involved in the process which maintains transcribable genes in a unique chromatin conformation. Inhibits the phosphorylation of nucleosomal histones H3 and H2A by RPS6KA5/MSK1 and RPS6KA3/RSK2. The chain is Non-histone chromosomal protein HMG-14 (HMGN1) from Homo sapiens (Human).